Reading from the N-terminus, the 143-residue chain is Transcriptional regulator MraZ (143 aa).

SpoVT-AbrB domains are found at residues 5-47 (TYTP…PRAE) and 76-119 (TDEQ…DAQA).

Belongs to the MraZ family. As to quaternary structure, forms oligomers.

It localises to the cytoplasm. The protein resides in the nucleoid. This Mycobacterium avium (strain 104) protein is Transcriptional regulator MraZ.